A 68-amino-acid polypeptide reads, in one-letter code: uncharacterized protein (68 aa).

The N-terminal stretch at 1–15 (MTIIFLICLDASTQS) is a signal peptide. Residues 14 to 68 (QSTTNNSINNNNNNNNNNNNNNNNNNNNNNNNNNNNNNNNNNNNNNSKVFDFNIF) form a disordered region. N-linked (GlcNAc...) asparagine glycosylation is found at Asn-18 and Asn-58. A compositionally biased stretch (low complexity) spans 22-59 (NNNNNNNNNNNNNNNNNNNNNNNNNNNNNNNNNNNNNN).

The protein resides in the secreted. This is an uncharacterized protein from Dictyostelium discoideum (Social amoeba).